The primary structure comprises 228 residues: Ureidoacrylate amidohydrolase RutB (228 aa).

The Proton acceptor role is filled by Asp23. Lys132 is a catalytic residue. Catalysis depends on Cys165, which acts as the Nucleophile.

The protein belongs to the isochorismatase family. RutB subfamily.

The catalysed reaction is (Z)-3-ureidoacrylate + H2O + H(+) = (Z)-3-aminoacrylate + NH4(+) + CO2. It catalyses the reaction (Z)-3-ureidoacrylate + H2O = (Z)-3-aminoacrylate + carbamate + H(+). The enzyme catalyses (Z)-2-methylureidoacrylate + H2O + H(+) = (Z)-2-methylaminoacrylate + NH4(+) + CO2. In terms of biological role, hydrolyzes ureidoacrylate to form aminoacrylate and carbamate. The carbamate hydrolyzes spontaneously, thereby releasing one of the nitrogen atoms of the pyrimidine ring as ammonia and one of its carbon atoms as CO2. This chain is Ureidoacrylate amidohydrolase RutB, found in Agrobacterium fabrum (strain C58 / ATCC 33970) (Agrobacterium tumefaciens (strain C58)).